Reading from the N-terminus, the 538-residue chain is Succinyl-CoA:acetate CoA-transferase (538 aa).

Residue 305-309 (GVGSV) participates in CoA binding. The active-site 5-glutamyl coenzyme A thioester intermediate is E330. CoA is bound by residues N420 and G424.

It belongs to the acetyl-CoA hydrolase/transferase family.

The catalysed reaction is succinyl-CoA + acetate = succinate + acetyl-CoA. In terms of biological role, forms succinyl-CoA from succinate and acetyl-CoA. The protein is Succinyl-CoA:acetate CoA-transferase of Clostridium kluyveri (strain ATCC 8527 / DSM 555 / NBRC 12016 / NCIMB 10680 / K1).